The chain runs to 73 residues: Sec-independent protein translocase protein TatA (73 aa).

A helical transmembrane segment spans residues 1 to 21 (MGLSWQQLLILLLVVVVIFGT).

This sequence belongs to the TatA/E family. The Tat system comprises two distinct complexes: a TatABC complex, containing multiple copies of TatA, TatB and TatC subunits, and a separate TatA complex, containing only TatA subunits. Substrates initially bind to the TatABC complex, which probably triggers association of the separate TatA complex to form the active translocon.

The protein localises to the cell inner membrane. Part of the twin-arginine translocation (Tat) system that transports large folded proteins containing a characteristic twin-arginine motif in their signal peptide across membranes. TatA could form the protein-conducting channel of the Tat system. The sequence is that of Sec-independent protein translocase protein TatA from Histophilus somni (strain 129Pt) (Haemophilus somnus).